The primary structure comprises 208 residues: Small ribosomal subunit protein uS4 (208 aa).

In terms of domain architecture, S4 RNA-binding spans 98–158 (RRLDNVVYRL…EKNRKISVVA (61 aa)).

This sequence belongs to the universal ribosomal protein uS4 family. As to quaternary structure, part of the 30S ribosomal subunit. Contacts protein S5. The interaction surface between S4 and S5 is involved in control of translational fidelity.

Its function is as follows. One of the primary rRNA binding proteins, it binds directly to 16S rRNA where it nucleates assembly of the body of the 30S subunit. With S5 and S12 plays an important role in translational accuracy. The protein is Small ribosomal subunit protein uS4 of Lawsonia intracellularis (strain PHE/MN1-00).